Reading from the N-terminus, the 282-residue chain is Bifunctional protein FolD 2 (282 aa).

NADP(+) contacts are provided by residues Gly165–Ser167 and Ser190.

This sequence belongs to the tetrahydrofolate dehydrogenase/cyclohydrolase family. Homodimer.

The enzyme catalyses (6R)-5,10-methylene-5,6,7,8-tetrahydrofolate + NADP(+) = (6R)-5,10-methenyltetrahydrofolate + NADPH. It catalyses the reaction (6R)-5,10-methenyltetrahydrofolate + H2O = (6R)-10-formyltetrahydrofolate + H(+). The protein operates within one-carbon metabolism; tetrahydrofolate interconversion. Its function is as follows. Catalyzes the oxidation of 5,10-methylenetetrahydrofolate to 5,10-methenyltetrahydrofolate and then the hydrolysis of 5,10-methenyltetrahydrofolate to 10-formyltetrahydrofolate. In Acinetobacter baylyi (strain ATCC 33305 / BD413 / ADP1), this protein is Bifunctional protein FolD 2.